A 549-amino-acid polypeptide reads, in one-letter code: Thermosome subunit alpha (549 aa).

The tract at residues 529 to 549 (EGRQGAECPPNGCMGGMDMRM) is disordered.

This sequence belongs to the TCP-1 chaperonin family. Forms a Heterooligomeric complex of two stacked eight-membered rings.

Molecular chaperone; binds unfolded polypeptides in vitro, and has a weak ATPase activity. The protein is Thermosome subunit alpha (thsA) of Thermococcus sp. (strain KS-8).